Here is a 241-residue protein sequence, read N- to C-terminus: Uridylate kinase (241 aa).

12 to 15 is a binding site for ATP; the sequence is KLSG. The interval 20–25 is involved in allosteric activation by GTP; it reads GDKGQG. Glycine 54 is a UMP binding site. The ATP site is built by glycine 55 and arginine 59. UMP is bound by residues aspartate 74 and 135-142; that span reads TGSPYFST. The ATP site is built by asparagine 163, tyrosine 169, and aspartate 172.

It belongs to the UMP kinase family. In terms of assembly, homohexamer.

It localises to the cytoplasm. The enzyme catalyses UMP + ATP = UDP + ADP. The protein operates within pyrimidine metabolism; CTP biosynthesis via de novo pathway; UDP from UMP (UMPK route): step 1/1. With respect to regulation, allosterically activated by GTP. Inhibited by UTP. In terms of biological role, catalyzes the reversible phosphorylation of UMP to UDP. This chain is Uridylate kinase, found in Leuconostoc mesenteroides subsp. mesenteroides (strain ATCC 8293 / DSM 20343 / BCRC 11652 / CCM 1803 / JCM 6124 / NCDO 523 / NBRC 100496 / NCIMB 8023 / NCTC 12954 / NRRL B-1118 / 37Y).